The following is a 549-amino-acid chain: Thermosome subunit alpha (549 aa).

A disordered region spans residues 529 to 549; the sequence is EGRQGAECPPNGCMGGMDMRM.

It belongs to the TCP-1 chaperonin family. As to quaternary structure, forms a Heterooligomeric complex of two stacked eight-membered rings.

Functionally, molecular chaperone; binds unfolded polypeptides in vitro, and has a weak ATPase activity. In Thermococcus sp. (strain KS-8), this protein is Thermosome subunit alpha (thsA).